The following is a 977-amino-acid chain: Alanine--tRNA ligase (977 aa).

The tract at residues 512–535 is disordered; the sequence is SQVDSKLQSSTPAGTGSYDSKQVS. Residues His-618, His-622, Cys-720, and His-724 each contribute to the Zn(2+) site.

This sequence belongs to the class-II aminoacyl-tRNA synthetase family. Requires Zn(2+) as cofactor.

It localises to the cytoplasm. The enzyme catalyses tRNA(Ala) + L-alanine + ATP = L-alanyl-tRNA(Ala) + AMP + diphosphate. Catalyzes the attachment of alanine to tRNA(Ala) in a two-step reaction: alanine is first activated by ATP to form Ala-AMP and then transferred to the acceptor end of tRNA(Ala). Also edits incorrectly charged Ser-tRNA(Ala) and Gly-tRNA(Ala) via its editing domain. In Leptospira interrogans serogroup Icterohaemorrhagiae serovar copenhageni (strain Fiocruz L1-130), this protein is Alanine--tRNA ligase.